Reading from the N-terminus, the 301-residue chain is ATP synthase gamma chain (301 aa).

The protein belongs to the ATPase gamma chain family. In terms of assembly, F-type ATPases have 2 components, CF(1) - the catalytic core - and CF(0) - the membrane proton channel. CF(1) has five subunits: alpha(3), beta(3), gamma(1), delta(1), epsilon(1). CF(0) has three main subunits: a, b and c.

It is found in the cell inner membrane. Its function is as follows. Produces ATP from ADP in the presence of a proton gradient across the membrane. The gamma chain is believed to be important in regulating ATPase activity and the flow of protons through the CF(0) complex. The sequence is that of ATP synthase gamma chain from Helicobacter pylori (strain ATCC 700392 / 26695) (Campylobacter pylori).